Consider the following 282-residue polypeptide: Undecaprenyl-diphosphatase (282 aa).

The next 7 membrane-spanning stretches (helical) occupy residues 40 to 60 (GAAF…MYFW), 85 to 105 (ARMG…GLLF), 115 to 135 (SLYW…LAEW), 153 to 173 (IGWK…IPGS), 193 to 213 (AARF…IFQL), 230 to 250 (LAAA…FLLS), and 258 to 278 (TIFI…LSTG).

Belongs to the UppP family.

It localises to the cell inner membrane. The catalysed reaction is di-trans,octa-cis-undecaprenyl diphosphate + H2O = di-trans,octa-cis-undecaprenyl phosphate + phosphate + H(+). Catalyzes the dephosphorylation of undecaprenyl diphosphate (UPP). Confers resistance to bacitracin. The protein is Undecaprenyl-diphosphatase of Chlorobium phaeovibrioides (strain DSM 265 / 1930) (Prosthecochloris vibrioformis (strain DSM 265)).